The sequence spans 125 residues: Large ribosomal subunit protein bL12 (125 aa).

This sequence belongs to the bacterial ribosomal protein bL12 family. Homodimer. Part of the ribosomal stalk of the 50S ribosomal subunit. Forms a multimeric L10(L12)X complex, where L10 forms an elongated spine to which 2 to 4 L12 dimers bind in a sequential fashion. Binds GTP-bound translation factors.

Functionally, forms part of the ribosomal stalk which helps the ribosome interact with GTP-bound translation factors. Is thus essential for accurate translation. This Ruegeria sp. (strain TM1040) (Silicibacter sp.) protein is Large ribosomal subunit protein bL12.